The sequence spans 97 residues: Plastocyanin (97 aa).

Residues 1-97 (AEVKLGADDG…AGMKGEVTVT (97 aa)) form the Plastocyanin-like domain. Positions 37, 82, 85, and 90 each coordinate Cu cation.

Belongs to the plastocyanin family. The cofactor is Cu(2+).

It is found in the plastid. Its subcellular location is the chloroplast thylakoid membrane. Functionally, participates in electron transfer between P700 and the cytochrome b6-f complex in photosystem I. The polypeptide is Plastocyanin (PETE) (Daucus carota (Wild carrot)).